A 216-amino-acid chain; its full sequence is 3-isopropylmalate dehydratase small subunit (216 aa).

It belongs to the LeuD family. LeuD type 1 subfamily. As to quaternary structure, heterodimer of LeuC and LeuD.

It carries out the reaction (2R,3S)-3-isopropylmalate = (2S)-2-isopropylmalate. It functions in the pathway amino-acid biosynthesis; L-leucine biosynthesis; L-leucine from 3-methyl-2-oxobutanoate: step 2/4. Catalyzes the isomerization between 2-isopropylmalate and 3-isopropylmalate, via the formation of 2-isopropylmaleate. This is 3-isopropylmalate dehydratase small subunit from Ralstonia nicotianae (strain ATCC BAA-1114 / GMI1000) (Ralstonia solanacearum).